A 176-amino-acid polypeptide reads, in one-letter code: Isopentenyl-diphosphate Delta-isomerase (176 aa).

2 residues coordinate Mn(2+): H24 and H30. Residues 28-160 (LLHRAFSIFV…PSAFTVWFHC (133 aa)) form the Nudix hydrolase domain. Residue C65 is part of the active site. H67 lines the Mn(2+) pocket. E85 contacts Mg(2+). 2 residues coordinate Mn(2+): E110 and E112. E112 is a catalytic residue.

The protein belongs to the IPP isomerase type 1 family. Mg(2+) serves as cofactor. Mn(2+) is required as a cofactor.

The protein resides in the cytoplasm. The enzyme catalyses isopentenyl diphosphate = dimethylallyl diphosphate. It functions in the pathway isoprenoid biosynthesis; dimethylallyl diphosphate biosynthesis; dimethylallyl diphosphate from isopentenyl diphosphate: step 1/1. Its function is as follows. Catalyzes the 1,3-allylic rearrangement of the homoallylic substrate isopentenyl (IPP) to its highly electrophilic allylic isomer, dimethylallyl diphosphate (DMAPP). The polypeptide is Isopentenyl-diphosphate Delta-isomerase (Burkholderia multivorans (strain ATCC 17616 / 249)).